Consider the following 186-residue polypeptide: Threonylcarbamoyl-AMP synthase (186 aa).

The region spanning 3-186 (ILSLSECVDR…IINGSLIRHG (184 aa)) is the YrdC-like domain.

This sequence belongs to the SUA5 family. TsaC subfamily.

The protein resides in the cytoplasm. The enzyme catalyses L-threonine + hydrogencarbonate + ATP = L-threonylcarbamoyladenylate + diphosphate + H2O. Its function is as follows. Required for the formation of a threonylcarbamoyl group on adenosine at position 37 (t(6)A37) in tRNAs that read codons beginning with adenine. Catalyzes the conversion of L-threonine, HCO(3)(-)/CO(2) and ATP to give threonylcarbamoyl-AMP (TC-AMP) as the acyladenylate intermediate, with the release of diphosphate. The protein is Threonylcarbamoyl-AMP synthase of Buchnera aphidicola subsp. Baizongia pistaciae (strain Bp).